The chain runs to 113 residues: Transmembrane protein 256 (113 aa).

The signal sequence occupies residues 1-29; it reads MAGPAAAFRRLGALSGAAALGFASYGAHG. The Extracellular segment spans residues 30-63; that stretch reads AQFPDAYGKELFDKANKHHFLHSLALLGVPHCRK. N6-acetyllysine is present on Lys43. The chain crosses the membrane as a helical span at residues 64-84; sequence PLWAGLLLASGTTLFCTSFYY. At 85–92 the chain is on the cytoplasmic side; sequence QALSGDPS. Residues 93-113 traverse the membrane as a helical segment; the sequence is IQTLAPAGGTLLLLGWLALAL.

This sequence belongs to the TMEM256 family.

The protein localises to the membrane. This is Transmembrane protein 256 (TMEM256) from Homo sapiens (Human).